The primary structure comprises 94 residues: DNA-directed RNA polymerase subunit omega (94 aa).

The protein belongs to the RNA polymerase subunit omega family. In terms of assembly, the RNAP catalytic core consists of 2 alpha, 1 beta, 1 beta' and 1 omega subunit. When a sigma factor is associated with the core the holoenzyme is formed, which can initiate transcription.

It catalyses the reaction RNA(n) + a ribonucleoside 5'-triphosphate = RNA(n+1) + diphosphate. Functionally, promotes RNA polymerase assembly. Latches the N- and C-terminal regions of the beta' subunit thereby facilitating its interaction with the beta and alpha subunits. This chain is DNA-directed RNA polymerase subunit omega, found in Tolumonas auensis (strain DSM 9187 / NBRC 110442 / TA 4).